Consider the following 415-residue polypeptide: MSEVEEVLKEAYKLVTPTPEEERKVAEVGSRVRQWVSEALAGVAAEVDMYGSSARSTWLPGQRDIDIFVVLRDRSIKPEDVVQTLSRYFDGVGVPWSLRYAQHPYLSLYVEGYEVDVVPCYKIAPGERPITAADRSPLHHKFLSERLSEDQRRDVRLLKLFLKSIGVYGAEIKVEGFSGYLTELLVAYYGSFVDVLKAASGWRPYRTYISFTESKTKFKAPLVVVDPVDPNRNVAAAVSLTSMSTFVLASRRFLKKPSLSYFSPPEAPALGVNAVEVVFPYPGESPDVVWGRYKRLGKSLYKHLRECGFKIYRWGVESDEKTYVSIIYVVEDVELPPYVLHRGPPVYDNAIDAFVEKYLREEVVGPFVLGTRAYVIKRRRYTNIGDCIRAKLGGGYAIRINQYGGGLVRKTPWLT.

Residues Ser-52 and Arg-55 each coordinate ATP. CTP-binding residues include Ser-52 and Arg-55. Mg(2+)-binding residues include Asp-64, Asp-66, and Asp-116. Positions 139, 159, and 168 each coordinate ATP. Residues His-139, Lys-159, and Tyr-168 each coordinate CTP.

It belongs to the tRNA nucleotidyltransferase/poly(A) polymerase family. Archaeal CCA-adding enzyme subfamily. As to quaternary structure, homodimer. Requires Mg(2+) as cofactor.

It catalyses the reaction a tRNA precursor + 2 CTP + ATP = a tRNA with a 3' CCA end + 3 diphosphate. The enzyme catalyses a tRNA with a 3' CCA end + 2 CTP + ATP = a tRNA with a 3' CCACCA end + 3 diphosphate. Its function is as follows. Catalyzes the addition and repair of the essential 3'-terminal CCA sequence in tRNAs without using a nucleic acid template. Adds these three nucleotides in the order of C, C, and A to the tRNA nucleotide-73, using CTP and ATP as substrates and producing inorganic pyrophosphate. tRNA 3'-terminal CCA addition is required both for tRNA processing and repair. Also involved in tRNA surveillance by mediating tandem CCA addition to generate a CCACCA at the 3' terminus of unstable tRNAs. While stable tRNAs receive only 3'-terminal CCA, unstable tRNAs are marked with CCACCA and rapidly degraded. The protein is CCA-adding enzyme of Pyrobaculum neutrophilum (strain DSM 2338 / JCM 9278 / NBRC 100436 / V24Sta) (Thermoproteus neutrophilus).